We begin with the raw amino-acid sequence, 112 residues long: B3 domain-containing protein At1g43171 (112 aa).

Positions 19 to 112 (DIVGNVALPK…FENKFIVLNF (94 aa)) form a DNA-binding region, TF-B3.

The protein resides in the nucleus. This chain is B3 domain-containing protein At1g43171, found in Arabidopsis thaliana (Mouse-ear cress).